Reading from the N-terminus, the 802-residue chain is Valine--tRNA ligase (802 aa).

The short motif at 45–55 (PTISGQLHIGH) is the 'HIGH' region element. The short motif at 524-528 (KMSKS) is the 'KMSKS' region element. Position 527 (Lys527) interacts with ATP.

It belongs to the class-I aminoacyl-tRNA synthetase family. ValS type 2 subfamily. As to quaternary structure, monomer.

The protein localises to the cytoplasm. The catalysed reaction is tRNA(Val) + L-valine + ATP = L-valyl-tRNA(Val) + AMP + diphosphate. Catalyzes the attachment of valine to tRNA(Val). As ValRS can inadvertently accommodate and process structurally similar amino acids such as threonine, to avoid such errors, it has a 'posttransfer' editing activity that hydrolyzes mischarged Thr-tRNA(Val) in a tRNA-dependent manner. This chain is Valine--tRNA ligase, found in Ehrlichia canis (strain Jake).